The following is an 880-amino-acid chain: Dynamin-like protein A (880 aa).

The tract at residues 1–124 (MSVFKKKDKS…QVELERKRRD (124 aa)) is disordered. A compositionally biased stretch (basic and acidic residues) spans 8-20 (DKSDDKKKKHDEE). Polar residues predominate over residues 22 to 31 (PQGTFQPASQ). Over residues 32 to 68 (STSNTNLNSLASSVNNGASVGSTNGSTPNNSNGSTPT) the composition is skewed to low complexity. The stretch at 69–152 (YNHNNSAEEL…NEQVEISSLE (84 aa)) forms a coiled coil. 2 stretches are compositionally biased toward basic and acidic residues: residues 77 to 94 (ELEKQKKEEDEKRKKSEL) and 103 to 124 (KKKEDEEKQRKEQVELERKRRD). The Dynamin-type G domain occupies 191-478 (AVSHPEIVFV…VWKSYQDTIP (288 aa)). A G1 motif region spans residues 201 to 208 (GPRSSGKS). 201-208 (GPRSSGKS) is a GTP binding site. The G2 motif stretch occupies residues 227 to 240 (IVGVGGSNANGCSK). The interval 315 to 318 (DSPG) is G3 motif. GTP contacts are provided by residues 315–319 (DSPGL) and 380–383 (TKFH). Residues 380 to 383 (TKFH) form a G4 motif region. Residues 413–416 (LPNH) are G5 motif. Residues 479–509 (RILKHLRSKRQTAEATLNELQKQSSSLDSTK) adopt a coiled-coil conformation. Positions 532–543 (TSEGNPSANGQT) are enriched in polar residues. A disordered region spans residues 532–551 (TSEGNPSANGQTLDEEKSQQ). Residues 824-861 (SNEQLEQLFEVQATREQLKQEEKKQQQILEKYSQIDEQ) adopt a coiled-coil conformation.

The protein belongs to the TRAFAC class dynamin-like GTPase superfamily. Dynamin/Fzo/YdjA family.

It localises to the cytoplasm. Its subcellular location is the cleavage furrow. It catalyses the reaction GTP + H2O = GDP + phosphate + H(+). Functionally, involved in cytokinesis. May hydrolyze GTP. The sequence is that of Dynamin-like protein A (dlpA) from Dictyostelium discoideum (Social amoeba).